We begin with the raw amino-acid sequence, 37 residues long: Large ribosomal subunit protein bL36 (37 aa).

This sequence belongs to the bacterial ribosomal protein bL36 family.

The polypeptide is Large ribosomal subunit protein bL36 (Halalkalibacterium halodurans (strain ATCC BAA-125 / DSM 18197 / FERM 7344 / JCM 9153 / C-125) (Bacillus halodurans)).